The sequence spans 81 residues: Sulfur carrier protein TusA (81 aa).

C19 (cysteine persulfide intermediate) is an active-site residue.

This sequence belongs to the sulfur carrier protein TusA family.

The protein resides in the cytoplasm. Sulfur carrier protein which probably makes part of a sulfur-relay system. This Aeromonas salmonicida (strain A449) protein is Sulfur carrier protein TusA.